The primary structure comprises 548 residues: Hydroxylamine reductase (548 aa).

Residues Cys3, Cys6, Cys15, and Cys21 each coordinate [4Fe-4S] cluster. Residues His240, Glu264, Cys308, Cys402, Cys430, Cys455, Glu490, and Lys492 each contribute to the hybrid [4Fe-2O-2S] cluster site. A Cysteine persulfide modification is found at Cys402.

The protein belongs to the HCP family. Requires [4Fe-4S] cluster as cofactor. Hybrid [4Fe-2O-2S] cluster serves as cofactor.

It is found in the cytoplasm. The enzyme catalyses A + NH4(+) + H2O = hydroxylamine + AH2 + H(+). In terms of biological role, catalyzes the reduction of hydroxylamine to form NH(3) and H(2)O. The chain is Hydroxylamine reductase from Parabacteroides distasonis (strain ATCC 8503 / DSM 20701 / CIP 104284 / JCM 5825 / NCTC 11152).